Consider the following 195-residue polypeptide: dITP/XTP pyrophosphatase (195 aa).

Residue 8–13 (SGNAGK) participates in substrate binding. 2 residues coordinate Mg(2+): Glu38 and Asp67. Catalysis depends on Asp67, which acts as the Proton acceptor. Substrate contacts are provided by residues Ser68, 146–149 (FGYD), Lys169, and 174–175 (HR).

This sequence belongs to the HAM1 NTPase family. Homodimer. Mg(2+) is required as a cofactor.

The enzyme catalyses XTP + H2O = XMP + diphosphate + H(+). The catalysed reaction is dITP + H2O = dIMP + diphosphate + H(+). It catalyses the reaction ITP + H2O = IMP + diphosphate + H(+). Functionally, pyrophosphatase that catalyzes the hydrolysis of nucleoside triphosphates to their monophosphate derivatives, with a high preference for the non-canonical purine nucleotides XTP (xanthosine triphosphate), dITP (deoxyinosine triphosphate) and ITP. Seems to function as a house-cleaning enzyme that removes non-canonical purine nucleotides from the nucleotide pool, thus preventing their incorporation into DNA/RNA and avoiding chromosomal lesions. The protein is dITP/XTP pyrophosphatase of Parasynechococcus marenigrum (strain WH8102).